Here is a 92-residue protein sequence, read N- to C-terminus: DNA-directed RNA polymerase subunit Rpo5 (92 aa).

Belongs to the archaeal Rpo5/eukaryotic RPB5 RNA polymerase subunit family. In terms of assembly, part of the RNA polymerase complex.

Its subcellular location is the cytoplasm. The enzyme catalyses RNA(n) + a ribonucleoside 5'-triphosphate = RNA(n+1) + diphosphate. In terms of biological role, DNA-dependent RNA polymerase (RNAP) catalyzes the transcription of DNA into RNA using the four ribonucleoside triphosphates as substrates. The polypeptide is DNA-directed RNA polymerase subunit Rpo5 (Methanopyrus kandleri (strain AV19 / DSM 6324 / JCM 9639 / NBRC 100938)).